Here is a 474-residue protein sequence, read N- to C-terminus: MKLFNTLTRQKEEFKPLVPGQVSMYVCGPTVYNYIHIGNARSAIAFDTIRRYFEYKGYKVNYVSNFTDVDDKMINEAGAEGTTVPELAERYIQAFLEDTRALNIEEATLHPRATHEIPAIIDFIQTLIDKGYAYEADGDVYYRAKKFADYGHLSDQNIDQLEEGASQHVNDEEQGRKEDPIDFALWKGQKAADEIAWDSPWGKGRPGWHIECSVMSTKYLGDTLDIHGGGQDLEFPHHENEIAQSEAKTGKKFVNYWLHNGFVTVGKDEEKMSKSLHNFVTVYDILKNVDPQVLRFFMASVQYRSQINYSEENLEQAANILGRFKNTLEGINYRLADATEGLPDPDLAKLVTETTAKFEAAMDDDFNVQNALTAIYEALPAVNSNANAEKADKESLRLFAKKLAAWLSVFGLDVDKLLAKEAGDDDAVIEELVAQRTEARKNKDWAKSDELRDQLKEMGVVLKDTPQGTRWSRE.

Cys-27 provides a ligand contact to Zn(2+). A 'HIGH' region motif is present at residues 29–39 (PTVYNYIHIGN). Cys-212, His-237, and Glu-241 together coordinate Zn(2+). A 'KMSKS' region motif is present at residues 271–275 (KMSKS). ATP is bound at residue Lys-274.

Belongs to the class-I aminoacyl-tRNA synthetase family. As to quaternary structure, monomer. Zn(2+) serves as cofactor.

It is found in the cytoplasm. The enzyme catalyses tRNA(Cys) + L-cysteine + ATP = L-cysteinyl-tRNA(Cys) + AMP + diphosphate. The protein is Cysteine--tRNA ligase of Lactobacillus delbrueckii subsp. bulgaricus (strain ATCC BAA-365 / Lb-18).